We begin with the raw amino-acid sequence, 128 residues long: Ribosome-binding factor A (128 aa).

It belongs to the RbfA family. Monomer. Binds 30S ribosomal subunits, but not 50S ribosomal subunits or 70S ribosomes.

The protein localises to the cytoplasm. Functionally, one of several proteins that assist in the late maturation steps of the functional core of the 30S ribosomal subunit. Associates with free 30S ribosomal subunits (but not with 30S subunits that are part of 70S ribosomes or polysomes). Required for efficient processing of 16S rRNA. May interact with the 5'-terminal helix region of 16S rRNA. The sequence is that of Ribosome-binding factor A from Pseudomonas paraeruginosa (strain DSM 24068 / PA7) (Pseudomonas aeruginosa (strain PA7)).